Here is a 51-residue protein sequence, read N- to C-terminus: Glutamate dehydrogenase (51 aa).

Lysine 31 is a binding site for substrate.

The protein belongs to the Glu/Leu/Phe/Val dehydrogenases family. In terms of assembly, homohexamer.

It is found in the mitochondrion matrix. It catalyses the reaction L-glutamate + NAD(+) + H2O = 2-oxoglutarate + NH4(+) + NADH + H(+). The enzyme catalyses L-glutamate + NADP(+) + H2O = 2-oxoglutarate + NH4(+) + NADPH + H(+). Mitochondrial glutamate dehydrogenase that converts L-glutamate into alpha-ketoglutarate. Plays a key role in glutamine anaplerosis by producing alpha-ketoglutarate, an important intermediate in the tricarboxylic acid cycle. This is Glutamate dehydrogenase from Electrophorus electricus (Electric eel).